The chain runs to 495 residues: tRNA(Ile)-lysidine synthase (495 aa).

Residue 26 to 31 (SGGSDS) coordinates ATP.

This sequence belongs to the tRNA(Ile)-lysidine synthase family.

The protein resides in the cytoplasm. The catalysed reaction is cytidine(34) in tRNA(Ile2) + L-lysine + ATP = lysidine(34) in tRNA(Ile2) + AMP + diphosphate + H(+). Ligates lysine onto the cytidine present at position 34 of the AUA codon-specific tRNA(Ile) that contains the anticodon CAU, in an ATP-dependent manner. Cytidine is converted to lysidine, thus changing the amino acid specificity of the tRNA from methionine to isoleucine. This Bartonella tribocorum (strain CIP 105476 / IBS 506) protein is tRNA(Ile)-lysidine synthase.